We begin with the raw amino-acid sequence, 20 residues long: Hemocyanin subunit Ia (20 aa).

Positions 1-20 (ADXQPGDSTDKLLAQKQDDV) are disordered.

This sequence belongs to the tyrosinase family. Hemocyanin subfamily. As to quaternary structure, composed of 3 major subunits (IB, II and III) and 1 minor subunit (IA) which form homohexamers and heterohexamers. May also form larger structures. In terms of tissue distribution, hemolymph.

It is found in the secreted. The protein resides in the extracellular space. Hemocyanins are copper-containing oxygen carriers occurring freely dissolved in the hemolymph of many mollusks and arthropods. This is Hemocyanin subunit Ia from Panulirus japonicus (Japanese spiny lobster).